The following is a 532-amino-acid chain: Alkaline phosphatase (532 aa).

A disordered region spans residues 1–20 (MASERDPLLPVHGEGPESPS). The chain crosses the membrane as a helical; Signal-anchor for type II membrane protein span at residues 27 to 47 (WIKHGILLILVLSTVIFFYFF). A Mg(2+)-binding site is contributed by D68. D68 serves as a coordination point for Zn(2+). The active-site Phosphoserine intermediate is S115. Mg(2+) is bound by residues D166, T168, and E306. Residues D311, H315, D352, H353, and H456 each coordinate Zn(2+).

This sequence belongs to the alkaline phosphatase family. Requires Mg(2+) as cofactor. It depends on Zn(2+) as a cofactor.

The protein resides in the membrane. The enzyme catalyses a phosphate monoester + H2O = an alcohol + phosphate. This chain is Alkaline phosphatase, found in Schizosaccharomyces pombe (strain 972 / ATCC 24843) (Fission yeast).